A 209-amino-acid polypeptide reads, in one-letter code: Octanoyltransferase (209 aa).

Positions 30 to 209 (DNEPEIVYLV…IQTEFNKIFK (180 aa)) constitute a BPL/LPL catalytic domain. Residues 69–76 (RGGKFTFH), 143–145 (AIG), and 156–158 (GIA) contribute to the substrate site. Residue C174 is the Acyl-thioester intermediate of the active site.

The protein belongs to the LipB family.

It localises to the cytoplasm. The catalysed reaction is octanoyl-[ACP] + L-lysyl-[protein] = N(6)-octanoyl-L-lysyl-[protein] + holo-[ACP] + H(+). It participates in protein modification; protein lipoylation via endogenous pathway; protein N(6)-(lipoyl)lysine from octanoyl-[acyl-carrier-protein]: step 1/2. Functionally, catalyzes the transfer of endogenously produced octanoic acid from octanoyl-acyl-carrier-protein onto the lipoyl domains of lipoate-dependent enzymes. Lipoyl-ACP can also act as a substrate although octanoyl-ACP is likely to be the physiological substrate. This chain is Octanoyltransferase, found in Rickettsia prowazekii (strain Madrid E).